The following is a 374-amino-acid chain: UDP-N-acetylglucosamine--N-acetylmuramyl-(pentapeptide) pyrophosphoryl-undecaprenol N-acetylglucosamine transferase (374 aa).

Residues 13-15, Asn124, Arg165, Ser193, and Gln294 contribute to the UDP-N-acetyl-alpha-D-glucosamine site; that span reads TGG.

The protein belongs to the glycosyltransferase 28 family. MurG subfamily.

The protein localises to the cell inner membrane. It catalyses the reaction di-trans,octa-cis-undecaprenyl diphospho-N-acetyl-alpha-D-muramoyl-L-alanyl-D-glutamyl-meso-2,6-diaminopimeloyl-D-alanyl-D-alanine + UDP-N-acetyl-alpha-D-glucosamine = di-trans,octa-cis-undecaprenyl diphospho-[N-acetyl-alpha-D-glucosaminyl-(1-&gt;4)]-N-acetyl-alpha-D-muramoyl-L-alanyl-D-glutamyl-meso-2,6-diaminopimeloyl-D-alanyl-D-alanine + UDP + H(+). Its pathway is cell wall biogenesis; peptidoglycan biosynthesis. Its function is as follows. Cell wall formation. Catalyzes the transfer of a GlcNAc subunit on undecaprenyl-pyrophosphoryl-MurNAc-pentapeptide (lipid intermediate I) to form undecaprenyl-pyrophosphoryl-MurNAc-(pentapeptide)GlcNAc (lipid intermediate II). This chain is UDP-N-acetylglucosamine--N-acetylmuramyl-(pentapeptide) pyrophosphoryl-undecaprenol N-acetylglucosamine transferase, found in Rhizobium leguminosarum bv. trifolii (strain WSM2304).